A 132-amino-acid polypeptide reads, in one-letter code: Large ribosomal subunit protein bL17 (132 aa).

Belongs to the bacterial ribosomal protein bL17 family. In terms of assembly, part of the 50S ribosomal subunit. Contacts protein L32.

The sequence is that of Large ribosomal subunit protein bL17 from Albidiferax ferrireducens (strain ATCC BAA-621 / DSM 15236 / T118) (Rhodoferax ferrireducens).